The sequence spans 289 residues: BTB/POZ domain-containing protein KCTD7 (289 aa).

Residues 1–42 are disordered; it reads MVVVTGREPDSRHSDGAMSSSEAEDDFLEPATPTATQAGHGL. The BTB domain occupies 53–141; that stretch reads VPLNIGGAHF…YAIGPLLEQL (89 aa).

In terms of assembly, interacts with CUL3. In terms of tissue distribution, high expression in brain, particularly in post-mitotic neurons. Expressed in the mitral cells of the olfactory bulbs, the hippocampus, the deep layers of the cerebral cortex and Purkinje cells of the cerebellum. Not detected in astrocytes or microglial cells. Also expressed in heart, liver, spleen and kidney.

It is found in the cell membrane. It localises to the cytoplasm. The protein localises to the cytosol. Functionally, may be involved in the control of excitability of cortical neurons. This is BTB/POZ domain-containing protein KCTD7 (Kctd7) from Mus musculus (Mouse).